The chain runs to 388 residues: Putative [LysW]-aminoadipate semialdehyde/glutamate semialdehyde transaminase (388 aa).

Pyridoxal 5'-phosphate contacts are provided by residues 100 to 101 (GT) and phenylalanine 127. Arginine 130 provides a ligand contact to substrate. 211–214 (DEIQ) is a binding site for pyridoxal 5'-phosphate. N6-(pyridoxal phosphate)lysine is present on lysine 240. Serine 268 contacts substrate. Threonine 269 provides a ligand contact to pyridoxal 5'-phosphate.

The protein belongs to the class-III pyridoxal-phosphate-dependent aminotransferase family. LysJ subfamily. In terms of assembly, homodimer. Pyridoxal 5'-phosphate is required as a cofactor.

It is found in the cytoplasm. The catalysed reaction is [amino-group carrier protein]-C-terminal-gamma-(L-lysyl)-L-glutamate + 2-oxoglutarate = [amino-group carrier protein]-C-terminal-N-(1-carboxy-5-oxopentan-1-yl)-L-glutamine + L-glutamate. It carries out the reaction [amino-group carrier protein]-C-terminal-gamma-(L-ornithyl)-L-glutamate + 2-oxoglutarate = [amino-group carrier protein]-C-terminal-gamma-(L-glutamyl-5-semialdehyde)-L-glutamate + L-glutamate. Its pathway is amino-acid biosynthesis; L-lysine biosynthesis via AAA pathway; L-lysine from L-alpha-aminoadipate (Thermus route): step 4/5. It functions in the pathway amino-acid biosynthesis; L-arginine biosynthesis. In terms of biological role, involved in both the arginine and lysine biosynthetic pathways. The polypeptide is Putative [LysW]-aminoadipate semialdehyde/glutamate semialdehyde transaminase (Aeropyrum pernix (strain ATCC 700893 / DSM 11879 / JCM 9820 / NBRC 100138 / K1)).